A 1058-amino-acid polypeptide reads, in one-letter code: Ubiquitin-like modifier-activating enzyme 1 (1058 aa).

The tract at residues 1–47 (MSSSPLSKKRRVSGPDPKPGSNCSPAQSVLSEVPSVPTNGMAKNGSE) is disordered. An N-acetylserine modification is found at Ser2. Ser2 is modified (N-acetylalanine). The residue at position 4 (Ser4) is a Phosphoserine. The Nuclear localization signal motif lies at 5–11 (PLSKKRR). Phosphoserine occurs at positions 13, 21, 24, and 46. Polar residues predominate over residues 21-30 (SNCSPAQSVL). Tyr55 is subject to Phosphotyrosine. Tandem repeats lie at residues 63–199 (GHEA…GQLF) and 459–611 (GSDL…QVVI). The segment at 63–611 (GHEAMKRLQT…GTKGNVQVVI (549 aa)) is 2 approximate repeats. ATP is bound by residues Ala478, Asp504, Arg515, Lys528, and 576–577 (DN). Lys528 carries the post-translational modification N6-succinyllysine. Cys632 functions as the Glycyl thioester intermediate in the catalytic mechanism. Lys671 is subject to N6-acetyllysine. Thr800 carries the post-translational modification Phosphothreonine. Phosphoserine occurs at positions 810, 816, 820, and 835. Lys980 is modified (N6-acetyllysine).

Belongs to the ubiquitin-activating E1 family. Monomer. Interacts with GAN (via BTB domain). Post-translationally, ISGylated. Detected in erythrocytes (at protein level). Ubiquitous.

Its subcellular location is the cytoplasm. It localises to the mitochondrion. The protein localises to the nucleus. It carries out the reaction ATP + ubiquitin + [E1 ubiquitin-activating enzyme]-L-cysteine = AMP + diphosphate + S-ubiquitinyl-[E1 ubiquitin-activating enzyme]-L-cysteine.. Its pathway is protein modification; protein ubiquitination. Functionally, catalyzes the first step in ubiquitin conjugation to mark cellular proteins for degradation through the ubiquitin-proteasome system. Activates ubiquitin by first adenylating its C-terminal glycine residue with ATP, and thereafter linking this residue to the side chain of a cysteine residue in E1, yielding a ubiquitin-E1 thioester and free AMP. Essential for the formation of radiation-induced foci, timely DNA repair and for response to replication stress. Promotes the recruitment of TP53BP1 and BRCA1 at DNA damage sites. In Homo sapiens (Human), this protein is Ubiquitin-like modifier-activating enzyme 1 (UBA1).